Reading from the N-terminus, the 359-residue chain is Protein PAM71-homolog, chloroplastic (359 aa).

The transit peptide at 1–66 directs the protein to the chloroplast; that stretch reads MKLTSLSKNA…DLLWGKFRVR (66 aa). Residues 71-102 form a disordered region; sequence GVGSGSYSGGEEDGSQSSSLDQSPATSSESLK. Residues 85–98 show a composition bias toward low complexity; the sequence is SQSSSLDQSPATSS. 7 consecutive transmembrane segments (helical) span residues 110 to 130, 149 to 169, 177 to 197, 207 to 227, 269 to 289, 311 to 331, and 339 to 359; these read SLSIALVLLSCGLVFSLITFV, AFSLIFVSEIGDKTFFIAALL, LVLLGSMGALSLMTILSVVIG, FQTTLPIGEYAAIALLMFFGL, LTNPLEILWKSFSLVFFAEWG, GAIAGHLVATVLAIMGGAFLA, and VGYVGGALFLVFAAATFFGVF.

The protein belongs to the GDT1 family.

It localises to the plastid. It is found in the chloroplast membrane. Its function is as follows. Probable chloroplast-localized Mn(2+)/H(+) and/or Ca(2+)/H(+) antiporter regulating Ca(2+), Mn(2+) and pH homeostasis. The chain is Protein PAM71-homolog, chloroplastic from Arabidopsis thaliana (Mouse-ear cress).